Here is a 125-residue protein sequence, read N- to C-terminus: MSAGYRKAMLESEIQKVLTEALRNFKGESEIDPTLVSIVRIELSKDKRYANIFVSYLGNDEEKKKAVEFMEENKGYFRTAVAKNIRLFKAPELRFHEDIGIEASLRISKILEEIKKQEQEKEENE.

Belongs to the RbfA family. Monomer. Binds 30S ribosomal subunits, but not 50S ribosomal subunits or 70S ribosomes.

The protein localises to the cytoplasm. One of several proteins that assist in the late maturation steps of the functional core of the 30S ribosomal subunit. Associates with free 30S ribosomal subunits (but not with 30S subunits that are part of 70S ribosomes or polysomes). Required for efficient processing of 16S rRNA. May interact with the 5'-terminal helix region of 16S rRNA. In Kosmotoga olearia (strain ATCC BAA-1733 / DSM 21960 / TBF 19.5.1), this protein is Ribosome-binding factor A.